The primary structure comprises 204 residues: MAYSIEEEQEINQLKDWWKENGKTIIVAFILGVGGMFGWRYWQTHQAEQIAQASAQYDTLINSVQQDEQAKKANIEQFVQANSKTAYAVFALLDEAKKATEKQDFSAAEANLNQALTQSQDEVLTSIVALRLSAVQFQLGQLDNALSTLNQVKGESFNARKAILTGDIQVAKGDKVAAKNSFEQAQQSGSQLEQQMAKMKLNNL.

Residues 1–23 (MAYSIEEEQEINQLKDWWKENGK) lie on the Cytoplasmic side of the membrane. A helical membrane pass occupies residues 24-42 (TIIVAFILGVGGMFGWRYW). Topologically, residues 43-204 (QTHQAEQIAQ…QMAKMKLNNL (162 aa)) are periplasmic.

It belongs to the YfgM family. Interacts with the SecYEG translocon. Forms a complex with PpiD.

The protein resides in the cell inner membrane. In terms of biological role, may mediate protein transfer from the SecYEG translocon to the periplasmic chaperone network via its periplasmic C-terminal region. The sequence is that of Ancillary SecYEG translocon subunit from Haemophilus influenzae (strain ATCC 51907 / DSM 11121 / KW20 / Rd).